Here is an 88-residue protein sequence, read N- to C-terminus: Small ribosomal subunit protein bS20 (88 aa).

Belongs to the bacterial ribosomal protein bS20 family.

Its function is as follows. Binds directly to 16S ribosomal RNA. This Bartonella henselae (strain ATCC 49882 / DSM 28221 / CCUG 30454 / Houston 1) (Rochalimaea henselae) protein is Small ribosomal subunit protein bS20.